The following is a 372-amino-acid chain: MPLPDFHVSEPFTLGIELEMQVVNPPGYDLSQDSSPLIDAVKSQLTAGEVKHDITESMLEMATGVCRNIDQAAAQFSAMQQVILQAAADHHLEICGGGTHPFQKWQRQEVCDNARYQRTLENFGYLIQQATVFGQHVHIGCANGDDAIYLLHGLSRFVPHFIALAAASPYMQGSDTRFSSARLNIFSSFPDNGPMPWASNWQECEGLFRRLTYTSMIDSIKDLHWDIRPSPHFGTVEVRVMDTPLTLAHAVNIAGLIQATAHWLLTERPFRHQERDYLLYKFNRFQACRYGLEGTLTDVHTGNHHLLSDDTLRLLENVASSADNVGAASAINALRLQVKNGLNEARQMREFVTDGGSLIGLVKKHCEIWAGQ.

The protein belongs to the glutamate--cysteine ligase type 2 family. YbdK subfamily. As to quaternary structure, homodimer.

The enzyme catalyses L-cysteine + L-glutamate + ATP = gamma-L-glutamyl-L-cysteine + ADP + phosphate + H(+). Functionally, ATP-dependent carboxylate-amine ligase which exhibits weak glutamate--cysteine ligase activity. The protein is Putative glutamate--cysteine ligase 2 of Citrobacter koseri (strain ATCC BAA-895 / CDC 4225-83 / SGSC4696).